Here is a 544-residue protein sequence, read N- to C-terminus: Thermosome subunit (544 aa).

The protein belongs to the TCP-1 chaperonin family. As to quaternary structure, forms an oligomeric complex of eight-membered rings.

Functionally, molecular chaperone; binds unfolded polypeptides in vitro, and has a weak ATPase activity. The chain is Thermosome subunit (ths) from Methanothermococcus thermolithotrophicus (Methanococcus thermolithotrophicus).